The primary structure comprises 114 residues: Endoribonuclease MazF2 (114 aa).

It belongs to the PemK/MazF family. Probably forms a complex with cognate antitoxin MazE2.

In terms of biological role, toxic component of a type II toxin-antitoxin (TA) system. Acts as an endoribonuclease on single-strand RNA, cleaving between the second and third bases in the sequences CUCCU and UUCCU. Neutralized by coexpression with cognate antitoxin MazE2. In Mycobacterium bovis (strain ATCC BAA-935 / AF2122/97), this protein is Endoribonuclease MazF2 (mazF2).